A 433-amino-acid polypeptide reads, in one-letter code: Peptidoglycan DD-endopeptidase ShyC (433 aa).

A helical membrane pass occupies residues 10-30 (WLHRVLITAFSAIIVFAIFFL). The Zn(2+) site is built by His299, Asp303, and His380.

This sequence belongs to the peptidase M23B family. Requires Zn(2+) as cofactor.

The protein resides in the cell inner membrane. It participates in cell wall degradation; peptidoglycan degradation. Its activity is regulated as follows. Reduced activity in 0.5 mM EDTA and a complete loss of activity at higher EDTA concentrations. Functionally, cell wall peptidoglycan (PG) DD-endopeptidase. Hydrolyzes peptide cross-links which covalently connect adjacent PG strands probably to allow insertion of new glycans and thus cell wall expansion. Degrades purified whole PG sacculi in vitro. The chain is Peptidoglycan DD-endopeptidase ShyC from Vibrio cholerae serotype O1 (strain ATCC 39315 / El Tor Inaba N16961).